The following is a 179-amino-acid chain: Ribosomal RNA small subunit methyltransferase G (179 aa).

S-adenosyl-L-methionine-binding positions include Gly54, Phe59, 105–106, and Arg121; that span reads IE.

The protein belongs to the methyltransferase superfamily. RNA methyltransferase RsmG family.

It is found in the cytoplasm. It carries out the reaction guanosine(527) in 16S rRNA + S-adenosyl-L-methionine = N(7)-methylguanosine(527) in 16S rRNA + S-adenosyl-L-homocysteine. Its function is as follows. Specifically methylates the N7 position of guanine in position 527 of 16S rRNA. The sequence is that of Ribosomal RNA small subunit methyltransferase G from Helicobacter bizzozeronii.